A 68-amino-acid chain; its full sequence is Ferredoxin Fdx (68 aa).

The [3Fe-4S] cluster site is built by cysteine 12, glutamine 13, alanine 16, cysteine 18, and cysteine 56.

The cofactor is [3Fe-4S] cluster.

Ferredoxin that is the redox partner of cytochrome CYP51, a sterol 14alpha-demethylase encoded by an adjacent gene. The protein is Ferredoxin Fdx of Mycobacterium tuberculosis (strain ATCC 25618 / H37Rv).